The sequence spans 482 residues: Putative fatty acid desaturase 2-like protein FADS2B (482 aa).

Positions 1–31 (MKFEEKCGDNGSIVGRNQSYPGEKHQPKGKP) are disordered. The Cytoplasmic portion of the chain corresponds to 1-167 (MKFEEKCGDN…EAMNMFHANL (167 aa)). The Cytochrome b5 heme-binding domain occupies 56–132 (LSMYTWLEIQ…LKPLLIGELA (77 aa)). Residues H90 and H113 each coordinate heme. The helical transmembrane segment at 168 to 188 (GFFFLHFVQILILEVLAWLIV) threads the bilayer. Topologically, residues 189 to 190 (YH) are lumenal. A helical membrane pass occupies residues 191 to 211 (FGSGWPVTMFISFLLTISQAS). The Cytoplasmic segment spans residues 212 to 305 (SSFLQHDAGH…YEEQHLYFYK (94 aa)). A Histidine box-1 motif is present at residues 217-221 (HDAGH). Residues 254 to 258 (HFEQH) carry the Histidine box-2 motif. A helical transmembrane segment spans residues 306-326 (VWLPLFMPVYLKLPSMQAMYL). The Lumenal portion of the chain corresponds to 327-343 (QRYWVCFSLQDITWVSS). Residues 344-364 (FYIYFITFGLYYGIFGTMLLI) traverse the membrane as a helical segment. Residues 365-482 (YLVKFLESPW…AALWADAYYE (118 aa)) are Cytoplasmic-facing. The Histidine box-3 motif lies at 421–425 (QIEHH).

This sequence belongs to the fatty acid desaturase type 1 family.

It is found in the endoplasmic reticulum membrane. The protein operates within lipid metabolism; polyunsaturated fatty acid biosynthesis. The sequence is that of Putative fatty acid desaturase 2-like protein FADS2B from Homo sapiens (Human).